We begin with the raw amino-acid sequence, 208 residues long: Thiamine-phosphate synthase (208 aa).

4-amino-2-methyl-5-(diphosphooxymethyl)pyrimidine is bound by residues 36 to 40 (QLRMK) and Asp68. Mg(2+) contacts are provided by Asp69 and Asp88. Residue Thr107 participates in 4-amino-2-methyl-5-(diphosphooxymethyl)pyrimidine binding. 133 to 135 (TTT) contacts 2-[(2R,5Z)-2-carboxy-4-methylthiazol-5(2H)-ylidene]ethyl phosphate. Residue Lys136 participates in 4-amino-2-methyl-5-(diphosphooxymethyl)pyrimidine binding. Residue Gly169 coordinates 2-[(2R,5Z)-2-carboxy-4-methylthiazol-5(2H)-ylidene]ethyl phosphate.

Belongs to the thiamine-phosphate synthase family. Requires Mg(2+) as cofactor.

The enzyme catalyses 2-[(2R,5Z)-2-carboxy-4-methylthiazol-5(2H)-ylidene]ethyl phosphate + 4-amino-2-methyl-5-(diphosphooxymethyl)pyrimidine + 2 H(+) = thiamine phosphate + CO2 + diphosphate. It carries out the reaction 2-(2-carboxy-4-methylthiazol-5-yl)ethyl phosphate + 4-amino-2-methyl-5-(diphosphooxymethyl)pyrimidine + 2 H(+) = thiamine phosphate + CO2 + diphosphate. It catalyses the reaction 4-methyl-5-(2-phosphooxyethyl)-thiazole + 4-amino-2-methyl-5-(diphosphooxymethyl)pyrimidine + H(+) = thiamine phosphate + diphosphate. It functions in the pathway cofactor biosynthesis; thiamine diphosphate biosynthesis; thiamine phosphate from 4-amino-2-methyl-5-diphosphomethylpyrimidine and 4-methyl-5-(2-phosphoethyl)-thiazole: step 1/1. In terms of biological role, condenses 4-methyl-5-(beta-hydroxyethyl)thiazole monophosphate (THZ-P) and 2-methyl-4-amino-5-hydroxymethyl pyrimidine pyrophosphate (HMP-PP) to form thiamine monophosphate (TMP). The protein is Thiamine-phosphate synthase of Phocaeicola vulgatus (strain ATCC 8482 / DSM 1447 / JCM 5826 / CCUG 4940 / NBRC 14291 / NCTC 11154) (Bacteroides vulgatus).